Here is a 437-residue protein sequence, read N- to C-terminus: Probable N-acetylmuramidase (437 aa).

The signal sequence occupies residues 1 to 57; that stretch reads MPVSRVKVKNRHLKKKTKKPLAFYKPATKFAGAVLIAGTLTTTHELLLQQTSPMVQA. Disordered stretches follow at residues 217-244, 290-320, and 367-392; these read SSAG…SSTT, ASST…SQTT, and AASN…NSNA. The LysM 1 domain occupies 243–286; it reads TTYTVKSGDTLWGISQRYGISVAQIQSANNLKSTIIYIGQKLVL. The span at 290–317 shows a compositional bias: low complexity; it reads ASSTNSGGSNNSASTTPTTSVTPAKPTS. Positions 319–362 constitute a LysM 2 domain; the sequence is TTVKVKSGDTLWALSVKYKTSIAQLKSWNHLSSDTIYIGQNLIV. The LysM 3 domain occupies 393–436; that stretch reads SIHKVVKGDTLWGLSQKSGSPIASIKAWNHLSSDTILIGQYLRI.

The protein belongs to the glycosyl hydrolase 73 family.

Its subcellular location is the secreted. The enzyme catalyses Hydrolysis of (1-&gt;4)-beta-linkages between N-acetylmuramic acid and N-acetyl-D-glucosamine residues in a peptidoglycan and between N-acetyl-D-glucosamine residues in chitodextrins.. Its function is as follows. Hydrolyzes the cell wall of L.lactis and M.lysodeikticus. Required for cell separation during growth. The polypeptide is Probable N-acetylmuramidase (acmA) (Lactococcus lactis subsp. cremoris (strain MG1363)).